Consider the following 334-residue polypeptide: ATP-dependent kinase YFH7 (334 aa).

30–38 (GHPGSGKST) contributes to the ATP binding site.

It belongs to the YFH7 family.

Functionally, ATP-dependent kinase that could be involved in endoplasmic reticulum membrane assembly. In Eremothecium gossypii (strain ATCC 10895 / CBS 109.51 / FGSC 9923 / NRRL Y-1056) (Yeast), this protein is ATP-dependent kinase YFH7 (YFH7).